Here is a 495-residue protein sequence, read N- to C-terminus: ATP synthase subunit beta, chloroplastic (495 aa).

Position 172 to 179 (172 to 179) interacts with ATP; the sequence is GGAGVGKT.

Belongs to the ATPase alpha/beta chains family. F-type ATPases have 2 components, CF(1) - the catalytic core - and CF(0) - the membrane proton channel. CF(1) has five subunits: alpha(3), beta(3), gamma(1), delta(1), epsilon(1). CF(0) has four main subunits: a(1), b(1), b'(1) and c(9-12).

Its subcellular location is the plastid. It localises to the chloroplast thylakoid membrane. It carries out the reaction ATP + H2O + 4 H(+)(in) = ADP + phosphate + 5 H(+)(out). Produces ATP from ADP in the presence of a proton gradient across the membrane. The catalytic sites are hosted primarily by the beta subunits. The chain is ATP synthase subunit beta, chloroplastic from Pseudogaltonia clavata (Cape hyacinth).